We begin with the raw amino-acid sequence, 497 residues long: 4,4'-diaponeurosporene oxygenase (497 aa).

FAD is bound at residue 7 to 19; that stretch reads VIGGGLGGISAAI.

This sequence belongs to the carotenoid/retinoid oxidoreductase family. CrtP subfamily. FAD serves as cofactor.

The catalysed reaction is all-trans-4,4'-diaponeurosporene + 2 AH2 + 2 O2 = 4,4'-diaponeurosporenal + 2 A + 3 H2O. It participates in carotenoid biosynthesis; staphyloxanthin biosynthesis; staphyloxanthin from farnesyl diphosphate: step 3/5. Involved in the biosynthesis of the yellow-orange carotenoid staphyloxanthin, which plays a role in the virulence via its protective function against oxidative stress. Catalyzes the oxidation of the terminal methyl side group of 4,4'-diaponeurosporene to form 4,4'-diaponeurosporen-4-al. This is 4,4'-diaponeurosporene oxygenase from Staphylococcus aureus (strain USA300).